The following is a 357-amino-acid chain: 3-isopropylmalate dehydrogenase (357 aa).

An NAD(+)-binding site is contributed by 76–89 (GPKWDDLPSEKRPE). Substrate is bound by residues arginine 96, arginine 106, arginine 135, and aspartate 224. Aspartate 224, aspartate 248, and aspartate 252 together coordinate Mg(2+). Position 282–294 (282–294 (GSAPDIAGQDKAN)) interacts with NAD(+).

Belongs to the isocitrate and isopropylmalate dehydrogenases family. LeuB type 1 subfamily. Homodimer. Mg(2+) serves as cofactor. The cofactor is Mn(2+).

The protein localises to the cytoplasm. The catalysed reaction is (2R,3S)-3-isopropylmalate + NAD(+) = 4-methyl-2-oxopentanoate + CO2 + NADH. It functions in the pathway amino-acid biosynthesis; L-leucine biosynthesis; L-leucine from 3-methyl-2-oxobutanoate: step 3/4. Functionally, catalyzes the oxidation of 3-carboxy-2-hydroxy-4-methylpentanoate (3-isopropylmalate) to 3-carboxy-4-methyl-2-oxopentanoate. The product decarboxylates to 4-methyl-2 oxopentanoate. The chain is 3-isopropylmalate dehydrogenase from Nitratidesulfovibrio vulgaris (strain ATCC 29579 / DSM 644 / CCUG 34227 / NCIMB 8303 / VKM B-1760 / Hildenborough) (Desulfovibrio vulgaris).